The sequence spans 210 residues: Inner membrane-spanning protein YciB (210 aa).

Helical transmembrane passes span 12-32 (EVSPLLKLVLELGPLMVFFFA), 53-73 (IFIATGLFMAATAAALIASWI), 78-98 (LPMMPLVSGIVVFVFGALTLW), 115-135 (LFGAILLGGLLFGKSLLGYVF), 148-168 (KLTIRWGVFFLFLAVLNEVIW), and 175-195 (FWVAFKVWGTMPITILFTLAQ).

The protein belongs to the YciB family.

Its subcellular location is the cell inner membrane. In terms of biological role, plays a role in cell envelope biogenesis, maintenance of cell envelope integrity and membrane homeostasis. The protein is Inner membrane-spanning protein YciB of Rhizobium meliloti (strain 1021) (Ensifer meliloti).